A 125-amino-acid chain; its full sequence is Small ribosomal subunit protein uS13 (125 aa).

The disordered stretch occupies residues 90-125; it reads QRHRKGLPVRGQRTKTNARTRKGPKRTVAGKKKATK.

The protein belongs to the universal ribosomal protein uS13 family. As to quaternary structure, part of the 30S ribosomal subunit. Forms a loose heterodimer with protein S19. Forms two bridges to the 50S subunit in the 70S ribosome.

Functionally, located at the top of the head of the 30S subunit, it contacts several helices of the 16S rRNA. In the 70S ribosome it contacts the 23S rRNA (bridge B1a) and protein L5 of the 50S subunit (bridge B1b), connecting the 2 subunits; these bridges are implicated in subunit movement. Contacts the tRNAs in the A and P-sites. The polypeptide is Small ribosomal subunit protein uS13 (Bifidobacterium adolescentis (strain ATCC 15703 / DSM 20083 / NCTC 11814 / E194a)).